A 331-amino-acid chain; its full sequence is Probable cytosolic iron-sulfur protein assembly protein Ciao1 (331 aa).

WD repeat units follow at residues 12 to 51 (GHKG…WTTK), 57 to 96 (GHKR…ATLE), 97 to 136 (GHEN…EFEC), 142 to 181 (AHTQ…SDWD), 188 to 227 (SHTS…NEAG), 246 to 285 (QHSR…KRDE), and 297 to 331 (AHEQ…KLQE).

This sequence belongs to the WD repeat CIA1 family.

Its function is as follows. Essential component of the cytosolic iron-sulfur (Fe/S) protein assembly machinery. Required for the maturation of extramitochondrial Fe/S proteins. The polypeptide is Probable cytosolic iron-sulfur protein assembly protein Ciao1 (Drosophila grimshawi (Hawaiian fruit fly)).